A 141-amino-acid polypeptide reads, in one-letter code: Nucleoside diphosphate kinase (141 aa).

ATP is bound by residues Lys-11, Phe-59, Arg-87, Thr-93, Arg-104, and Asn-114.

It belongs to the NDK family. As to quaternary structure, homotetramer. Mg(2+) is required as a cofactor.

The protein resides in the cytoplasm. The catalysed reaction is a 2'-deoxyribonucleoside 5'-diphosphate + ATP = a 2'-deoxyribonucleoside 5'-triphosphate + ADP. The enzyme catalyses a ribonucleoside 5'-diphosphate + ATP = a ribonucleoside 5'-triphosphate + ADP. In terms of biological role, major role in the synthesis of nucleoside triphosphates other than ATP. The ATP gamma phosphate is transferred to the NDP beta phosphate via a ping-pong mechanism, using a phosphorylated active-site intermediate. In Saccharophagus degradans (strain 2-40 / ATCC 43961 / DSM 17024), this protein is Nucleoside diphosphate kinase.